Here is a 123-residue protein sequence, read N- to C-terminus: Large ribosomal subunit protein bL12 (123 aa).

Belongs to the bacterial ribosomal protein bL12 family. As to quaternary structure, homodimer. Part of the ribosomal stalk of the 50S ribosomal subunit. Forms a multimeric L10(L12)X complex, where L10 forms an elongated spine to which 2 to 4 L12 dimers bind in a sequential fashion. Binds GTP-bound translation factors.

Forms part of the ribosomal stalk which helps the ribosome interact with GTP-bound translation factors. Is thus essential for accurate translation. The chain is Large ribosomal subunit protein bL12 from Acinetobacter baumannii (strain AB307-0294).